We begin with the raw amino-acid sequence, 147 residues long: Hemoglobin subunit gamma-2 (147 aa).

Residues 3–147 form the Globin domain; the sequence is NFTAEDKAAI…VASALGSRYH (145 aa). Phosphothreonine is present on T13. 3 positions are modified to phosphoserine: S45, S51, and S53. K60 is subject to N6-acetyllysine. Residue H64 coordinates heme b. An N6-acetyllysine modification is found at K83. H93 contacts heme b. At C94 the chain carries S-nitrosocysteine. A phosphoserine mark is found at S140 and S144.

This sequence belongs to the globin family. Heterotetramer of two alpha chains and two gamma chains in fetal hemoglobin (Hb F). Red blood cells.

Gamma chains make up the fetal hemoglobin F, in combination with alpha chains. This is Hemoglobin subunit gamma-2 (HBG2) from Cebus albifrons (White-fronted capuchin).